Consider the following 188-residue polypeptide: Small ribosomal subunit protein uS7 (188 aa).

Belongs to the universal ribosomal protein uS7 family. Part of the 30S ribosomal subunit.

Functionally, one of the primary rRNA binding proteins, it binds directly to 16S rRNA where it nucleates assembly of the head domain of the 30S subunit. Is located at the subunit interface close to the decoding center. This chain is Small ribosomal subunit protein uS7, found in Methanococcus maripaludis (strain DSM 14266 / JCM 13030 / NBRC 101832 / S2 / LL).